Here is a 161-residue protein sequence, read N- to C-terminus: Large ribosomal subunit protein uL11 (161 aa).

The protein belongs to the universal ribosomal protein uL11 family. As to quaternary structure, part of the ribosomal stalk of the 50S ribosomal subunit. Interacts with L10 and the large rRNA to form the base of the stalk. L10 forms an elongated spine to which L12 dimers bind in a sequential fashion forming a multimeric L10(L12)X complex.

Forms part of the ribosomal stalk which helps the ribosome interact with GTP-bound translation factors. This chain is Large ribosomal subunit protein uL11, found in Methanocaldococcus jannaschii (strain ATCC 43067 / DSM 2661 / JAL-1 / JCM 10045 / NBRC 100440) (Methanococcus jannaschii).